The primary structure comprises 355 residues: Isopentenyl-diphosphate delta-isomerase (355 aa).

A substrate-binding site is contributed by 6 to 7 (RK). FMN contacts are provided by residues 62-64 (AMT), Ser93, and Asn122. Position 152 (Gln152) interacts with substrate. Residue Glu153 participates in Mg(2+) binding. FMN is bound by residues Lys184, Thr214, 258–259 (GG), and 280–281 (AG).

The protein belongs to the IPP isomerase type 2 family. As to quaternary structure, homooctamer. Dimer of tetramers. It depends on FMN as a cofactor. Requires NADPH as cofactor. Mg(2+) is required as a cofactor.

The protein localises to the cytoplasm. The catalysed reaction is isopentenyl diphosphate = dimethylallyl diphosphate. In terms of biological role, involved in the biosynthesis of isoprenoids. Catalyzes the 1,3-allylic rearrangement of the homoallylic substrate isopentenyl (IPP) to its allylic isomer, dimethylallyl diphosphate (DMAPP). This Bacillus pumilus (strain SAFR-032) protein is Isopentenyl-diphosphate delta-isomerase.